A 291-amino-acid chain; its full sequence is 4-diphosphocytidyl-2-C-methyl-D-erythritol kinase (291 aa).

Residue K10 is part of the active site. ATP is bound at residue 100–110; that stretch reads PIGGGLGGGSS. The active site involves D142.

Belongs to the GHMP kinase family. IspE subfamily. In terms of assembly, homodimer.

It catalyses the reaction 4-CDP-2-C-methyl-D-erythritol + ATP = 4-CDP-2-C-methyl-D-erythritol 2-phosphate + ADP + H(+). It functions in the pathway isoprenoid biosynthesis; isopentenyl diphosphate biosynthesis via DXP pathway; isopentenyl diphosphate from 1-deoxy-D-xylulose 5-phosphate: step 3/6. Functionally, catalyzes the phosphorylation of the position 2 hydroxy group of 4-diphosphocytidyl-2C-methyl-D-erythritol. The protein is 4-diphosphocytidyl-2-C-methyl-D-erythritol kinase of Hamiltonella defensa subsp. Acyrthosiphon pisum (strain 5AT).